We begin with the raw amino-acid sequence, 512 residues long: Reduced folate transporter (512 aa).

The residue at position 1 (methionine 1) is an N-acetylmethionine. The Cytoplasmic segment spans residues 1 to 29; sequence MVPTGQVAEKQACEEPRQDRELKSWRWLV. The chain crosses the membrane as a helical span at residues 30-50; sequence FYLCFFGFMAQLRPGESFITP. Residues isoleucine 48 and threonine 49 each contribute to the folate site. The Extracellular portion of the chain corresponds to 51–62; that stretch reads YLLERNFTKEQV. N-linked (GlcNAc...) asparagine glycosylation occurs at asparagine 56. Residues 63–85 form a helical membrane-spanning segment; sequence TNEIIPMLPYSHLAVLVPIFLLT. At 86-89 the chain is on the cytoplasmic side; the sequence is DYLR. The chain crosses the membrane as a helical span at residues 90–110; that stretch reads YKPVLVLQCLSFVCVWLLLLL. Residues 111–114 lie on the Extracellular side of the membrane; it reads GTSV. The helical transmembrane segment at 115 to 137 threads the bilayer; sequence VHMQLMEVFYSITMAARIAYSSY. Residues glutamate 121 and arginine 131 each coordinate folate. Residues 138-151 lie on the Cytoplasmic side of the membrane; it reads IFSLVQPSRYQRMA. The helical transmembrane segment at 152–176 threads the bilayer; sequence SYSRAAVLLGVFISSVLGQVLVTLG. Valine 162 serves as a coordination point for folate. Over 177-181 the chain is Extracellular; that stretch reads GISTY. The chain crosses the membrane as a helical span at residues 182-200; that stretch reads MLNCISLGFILFSLSLSLF. The Cytoplasmic portion of the chain corresponds to 201–266; it reads LKRPKRSLFF…ELVKNVRQPQ (66 aa). A helical membrane pass occupies residues 267–292; the sequence is LRLWCLWWVFNSAGYYLITYYVHVLW. Positions 281, 282, and 286 each coordinate folate. Residues 293–300 are Extracellular-facing; the sequence is KITDSRLN. The helical transmembrane segment at 301–323 threads the bilayer; the sequence is YNGAVDAASTLLSAITAFTAGFV. The Cytoplasmic segment spans residues 324–329; sequence NIRWAL. A helical membrane pass occupies residues 330–350; sequence WSKLVIASVIAIQAGLVFCMF. At 351–353 the chain is on the extracellular side; that stretch reads QIP. Residues 354 to 377 form a helical membrane-spanning segment; sequence DIWVCYVTFVLFRGAYQFLVPIAT. The folate site is built by arginine 366 and glutamine 370. Topologically, residues 378-391 are cytoplasmic; sequence FQIASSLSKELCAL. The helical transmembrane segment at 392–415 threads the bilayer; it reads VFGINTFLATALKTSITLVVSDKR. The tract at residues 400–412 is required for substrate-binding; sequence ATALKTSITLVVS. The Extracellular segment spans residues 416 to 423; the sequence is GLGLQVHQ. A helical membrane pass occupies residues 424-448; that stretch reads QFRIYFMYFLTLSIICLAWAGLDGL. At 449–512 the chain is on the cytoplasmic side; sequence RYYRRGRHQP…RADLRVEAKA (64 aa). Phosphoserine is present on residues serine 466, serine 471, and serine 476. The disordered stretch occupies residues 479 to 512; that stretch reads DGDLRRPQPSAPQLLPEDGSVEDGRADLRVEAKA. Basic and acidic residues predominate over residues 500-512; it reads EDGRADLRVEAKA.

The protein belongs to the reduced folate carrier (RFC) transporter (TC 2.A.48) family. In terms of tissue distribution, expressed in liver, heart, brain, spleen, lung and skeletal muscle.

The protein localises to the cell membrane. The protein resides in the apical cell membrane. It localises to the basolateral cell membrane. The enzyme catalyses 5-amino-1-(5-phospho-beta-D-ribosyl)imidazole-4-carboxamide(in) + (6S)-5-methyl-5,6,7,8-tetrahydrofolate(out) = 5-amino-1-(5-phospho-beta-D-ribosyl)imidazole-4-carboxamide(out) + (6S)-5-methyl-5,6,7,8-tetrahydrofolate(in). In terms of biological role, antiporter that mediates the import of reduced folates, driven by the export of organic anions. Also acts as an importer of immunoreactive cyclic dinucleotides, but with a lower transporter activity. Mechanistically, acts as a secondary active transporter, which exports intracellular organic anions down their concentration gradients to facilitate the uptake of its substrates. Has high affinity for N5-methyltetrahydrofolate, the predominant circulating form of folate. Also mediates the import of antifolate drug methotrexate. 5-amino-4-imidazolecarboxamide riboside (AICAR), when phosphorylated to AICAR monophosphate, can serve as an organic anion for antiporter activity. The polypeptide is Reduced folate transporter (Rattus norvegicus (Rat)).